The sequence spans 521 residues: C-22 sterol desaturase erg5 (521 aa).

The helical transmembrane segment at 30 to 50 (AVLNGFTFWKALATLFFAAVI) threads the bilayer.

The protein belongs to the cytochrome P450 family. Heme serves as cofactor.

The protein resides in the endoplasmic reticulum membrane. It carries out the reaction 5-dehydroepisterol + NADPH + O2 + H(+) = ergosta-5,7,22,24(28)-tetraen-3beta-ol + NADP(+) + 2 H2O. It participates in steroid metabolism; ergosterol biosynthesis. C-22 sterol desaturase; part of the third module of ergosterol biosynthesis pathway that includes the late steps of the pathway. Erg5 converts 5-dehydroepisterol into ergosta-5,7,22,24(28)-tetraen-3beta-ol by forming the C-22(23) double bond in the sterol side chain. The third module or late pathway involves the ergosterol synthesis itself through consecutive reactions that mainly occur in the endoplasmic reticulum (ER) membrane. Firstly, the squalene synthase erg9 catalyzes the condensation of 2 farnesyl pyrophosphate moieties to form squalene, which is the precursor of all steroids. Squalene synthase is crucial for balancing the incorporation of farnesyl diphosphate (FPP) into sterol and nonsterol isoprene synthesis. Secondly, squalene is converted into lanosterol by the consecutive action of the squalene epoxidase erg1 and the lanosterol synthase erg7. Then, the delta(24)-sterol C-methyltransferase erg6 methylates lanosterol at C-24 to produce eburicol. Eburicol is the substrate of the sterol 14-alpha demethylase encoded by cyp51A and cyp51B, to yield 4,4,24-trimethyl ergosta-8,14,24(28)-trienol. The C-14 reductase erg24 then reduces the C14=C15 double bond which leads to 4,4-dimethylfecosterol. A sequence of further demethylations at C-4, involving the C-4 demethylation complex containing the C-4 methylsterol oxidases erg25A or erg25B, the sterol-4-alpha-carboxylate 3-dehydrogenase erg26 and the 3-keto-steroid reductase erg27, leads to the production of fecosterol via 4-methylfecosterol. The C-8 sterol isomerase erg2 then catalyzes the reaction which results in unsaturation at C-7 in the B ring of sterols and thus converts fecosterol to episterol. The sterol-C5-desaturase erg3B then catalyzes the introduction of a C-5 double bond in the B ring to produce 5-dehydroepisterol. The 2 other sterol-C5-desaturases, erg3A and erg3C, seem to be less important in ergosterol biosynthesis. The C-22 sterol desaturase erg5 further converts 5-dehydroepisterol into ergosta-5,7,22,24(28)-tetraen-3beta-ol by forming the C-22(23) double bond in the sterol side chain. Finally, ergosta-5,7,22,24(28)-tetraen-3beta-ol is substrate of the C-24(28) sterol reductases erg4A and erg4B to produce ergosterol. Possible alternative sterol biosynthetic pathways might exist from fecosterol to ergosterol, depending on the activities of the erg3 isoforms. In Aspergillus fumigatus (strain ATCC MYA-4609 / CBS 101355 / FGSC A1100 / Af293) (Neosartorya fumigata), this protein is C-22 sterol desaturase erg5.